The sequence spans 588 residues: Ankyrin repeat and SOCS box protein 15 (588 aa).

ANK repeat units follow at residues 75–104, 110–139, 143–172, 176–205, 209–238, 242–271, 275–304, 307–336, 349–378, 379–408, and 416–444; these read KGWF…KTLW, DGET…WPNT, KGET…SLDQ, KRWS…NVHL, FGVT…DVLA, DGAS…SGNI, AGHL…KHAI, SGLT…DVNS, ERKT…DPNL, DPLN…NVNC, and TRFP…QVEM. Positions 524 to 579 constitute an SOCS box domain; that stretch reads WPEIRQILENPCSLKHLCRLKIRRLMGLQRLCQPTLMEKLSLPPTIQRYILFKEYD.

This sequence belongs to the ankyrin SOCS box (ASB) family.

It functions in the pathway protein modification; protein ubiquitination. May be a substrate-recognition component of a SCF-like ECS (Elongin-Cullin-SOCS-box protein) E3 ubiquitin-protein ligase complex which mediates the ubiquitination and subsequent proteasomal degradation of target proteins. The protein is Ankyrin repeat and SOCS box protein 15 (ASB15) of Bos taurus (Bovine).